The following is a 128-amino-acid chain: Cytochrome c-type biogenesis protein CcmE (128 aa).

The Cytoplasmic segment spans residues 1 to 8 (MQKRVRNR). Residues 9 to 29 (LITIIICFCSACLGISIILYN) form a helical; Signal-anchor for type II membrane protein membrane-spanning segment. Topologically, residues 30–128 (LEKNIVFFLP…KHDENYRPPQ (99 aa)) are periplasmic. Residues H120 and Y124 each coordinate heme.

It belongs to the CcmE/CycJ family.

It localises to the cell inner membrane. Heme chaperone required for the biogenesis of c-type cytochromes. Transiently binds heme delivered by CcmC and transfers the heme to apo-cytochromes in a process facilitated by CcmF and CcmH. This is Cytochrome c-type biogenesis protein CcmE from Rickettsia peacockii (strain Rustic).